Here is a 385-residue protein sequence, read N- to C-terminus: Glucans biosynthesis protein C (385 aa).

The next 10 helical transmembrane spans lie at 17 to 37 (AWLM…SHTW), 60 to 80 (MQVF…RYPL), 91 to 111 (VGIP…IMLQ), 137 to 157 (ISHL…VWIF), 173 to 193 (KFSM…YAVI), 212 to 232 (FIVM…LAFI), 239 to 259 (LFTT…VAYL), 274 to 294 (TESV…FSFG), 311 to 331 (ASLF…AYIT), and 338 to 358 (WLGF…LYEI).

This sequence belongs to the acyltransferase 3 family. OpgC subfamily.

Its subcellular location is the cell membrane. It participates in glycan metabolism; osmoregulated periplasmic glucan (OPG) biosynthesis. Functionally, necessary for the succinyl substitution of periplasmic glucans. Could catalyze the transfer of succinyl residues from the cytoplasmic side of the membrane to the nascent glucan backbones on the periplasmic side of the membrane. This Escherichia coli O45:K1 (strain S88 / ExPEC) protein is Glucans biosynthesis protein C.